A 1645-amino-acid chain; its full sequence is Cortactin-binding protein 2 (1645 aa).

Disordered regions lie at residues 1–28, 269–293, 366–435, 451–478, and 492–612; these read MATD…EAAK, LKRG…SVSI, IVSS…AALH, GNAN…SRDS, and ALSR…PPKP. A coiled-coil region spans residues 119 to 276; it reads RKMQERMSTQ…EQLKRGNDSK (158 aa). Polar residues-rich tracts occupy residues 407 to 417 and 451 to 477; these read QTPTIAPQSHA and GNAN…TSRD. Arginine 495 is modified (asymmetric dimethylarginine). The segment covering 580–590 has biased composition (polar residues); sequence TMASPPSTLPQ. ANK repeat units follow at residues 706–736, 740–769, 773–802, 806–835, 839–868, and 909–939; these read GRPT…DINY, DGHS…QVNA, NGFT…NINH, EGQT…DRSV, DGWT…PARR, and EGWT…EPER. The interval 868-898 is disordered; it reads RNSLHEEEPESGVFDLDQGEESPEGTSKPVI. Residues 1442–1479 are disordered; sequence CSRKKGESGAWRKVSTSPRKKSGRFSPPSWSKPGPSEE. A Phosphoserine modification is found at serine 1521. The segment at 1551-1645 is disordered; sequence DDLRSFDSPG…EINNNSKEEI (95 aa). Composition is skewed to polar residues over residues 1558 to 1569 and 1582 to 1597; these read SPGNSPAFSATV and PFSS…SQSK. A compositionally biased stretch (low complexity) spans 1620–1634; sequence SQNTKRSSSSSNTRQ. Positions 1635-1645 are enriched in polar residues; sequence IEINNNSKEEI.

As to quaternary structure, interacts with CTTN/cortactin SH3 domain. Interacts with STRN, STRN4/zinedin and MOB4/phocein; this interactions mediate the association with the STRIPAK core complex and may regulate dendritic spine distribution of the STRIPAK complex in hippocampal neurons. Activation of glutamate receptors weakens the interaction with STRN and STRN4.

The protein resides in the cytoplasm. Its subcellular location is the cell cortex. It localises to the cell projection. The protein localises to the dendritic spine. In terms of biological role, regulates the dendritic spine distribution of CTTN/cortactin in hippocampal neurons, and thus controls dendritic spinogenesis and dendritic spine maintenance. Associates with the striatin-interacting phosphatase and kinase (STRIPAK) core complex to regulate dendritic spine distribution of the STRIPAK complex in hippocampal neurons. The protein is Cortactin-binding protein 2 (CTTNBP2) of Mustela putorius furo (European domestic ferret).